The primary structure comprises 260 residues: Dof zinc finger protein DOF1.2 (260 aa).

The Dof-type zinc finger occupies 38 to 92 (PACPRCASSNTKFCYYNNYSLSQPRYFCKGCRRYWTKGGSLRNIPVGGGCRKRSR). 4 residues coordinate Zn(2+): Cys-40, Cys-43, Cys-65, and Cys-68. A disordered region spans residues 83 to 124 (VGGGCRKRSRSRQNSHKRFGRNENRPDGLINQDDGFQSSPPG). Positions 87 to 101 (CRKRSRSRQNSHKRF) are enriched in basic residues.

Its subcellular location is the nucleus. In terms of biological role, transcription factor that binds specifically to a 5'-AA[AG]G-3' consensus core sequence. The polypeptide is Dof zinc finger protein DOF1.2 (DOF1.2) (Arabidopsis thaliana (Mouse-ear cress)).